A 381-amino-acid chain; its full sequence is Succinyl-diaminopimelate desuccinylase (381 aa).

His-71 is a Zn(2+) binding site. The active site involves Asp-73. Asp-104 contributes to the Zn(2+) binding site. Glu-138 acts as the Proton acceptor in catalysis. 3 residues coordinate Zn(2+): Glu-139, Glu-167, and His-353.

It belongs to the peptidase M20A family. DapE subfamily. In terms of assembly, homodimer. The cofactor is Zn(2+). Co(2+) serves as cofactor.

The catalysed reaction is N-succinyl-(2S,6S)-2,6-diaminopimelate + H2O = (2S,6S)-2,6-diaminopimelate + succinate. Its pathway is amino-acid biosynthesis; L-lysine biosynthesis via DAP pathway; LL-2,6-diaminopimelate from (S)-tetrahydrodipicolinate (succinylase route): step 3/3. Functionally, catalyzes the hydrolysis of N-succinyl-L,L-diaminopimelic acid (SDAP), forming succinate and LL-2,6-diaminopimelate (DAP), an intermediate involved in the bacterial biosynthesis of lysine and meso-diaminopimelic acid, an essential component of bacterial cell walls. This Shewanella piezotolerans (strain WP3 / JCM 13877) protein is Succinyl-diaminopimelate desuccinylase.